The primary structure comprises 263 residues: Methylesterase 1 (263 aa).

Serine 85 functions as the Acyl-ester intermediate in the catalytic mechanism. Residues aspartate 213 and histidine 241 each act as charge relay system in the active site.

The protein belongs to the AB hydrolase superfamily. Methylesterase family.

The enzyme catalyses methyl (indol-3-yl)acetate + H2O = (indol-3-yl)acetate + methanol + H(+). The catalysed reaction is methyl (-)-jasmonate + H2O = jasmonate + methanol + H(+). It catalyses the reaction methyl salicylate + H2O = salicylate + methanol + H(+). It participates in plant hormone biosynthesis. Its pathway is lipid metabolism; oxylipin biosynthesis. Esterase activity is down-regulated by salicylic acid (SA). Its function is as follows. Methylesterase shown to have carboxylesterase activity, methyl indole-3-acetic acid (MeIAA) esterase activity, methyl salicylate (MeSA) esterase activity and methyl jasmonate (MeJA) esterase activity in vitro. Required to convert methyl salicylate (MeSA) to salicylic acid (SA) as part of the signal transduction pathways that activate systemic acquired resistance in systemic tissue. MeSA is believed to be an inactive form that needs to be demethylated to exert a biological effect. The protein is Methylesterase 1 of Arabidopsis thaliana (Mouse-ear cress).